Here is a 60-residue protein sequence, read N- to C-terminus: Defensin MGD-1 (60 aa).

4 disulfide bridges follow: C4-C25, C10-C33, C14-C35, and C21-C38. Position 28 is a 3-hydroxytryptophan (W28). C38 bears the Cysteine amide mark. Residues 39–60 (GGRREDVEDIFDIFDNEAADRF) constitute a propeptide that is removed on maturation.

This sequence belongs to the invertebrate defensin family. Type 2 subfamily. The hydroxylation of the Trp-28 is not important for the antibacterial activity. In terms of tissue distribution, abundantly expressed in hemocytes.

It is found in the secreted. In terms of biological role, active against both Gram-positive and Gram-negative bacteria but is not cytotoxic towards human erythrocytes or protozoa. This is Defensin MGD-1 (FH3) from Mytilus galloprovincialis (Mediterranean mussel).